Consider the following 262-residue polypeptide: Small ribosomal subunit protein eS1 (262 aa).

It belongs to the eukaryotic ribosomal protein eS1 family. In terms of assembly, component of the small ribosomal subunit. Mature ribosomes consist of a small (40S) and a large (60S) subunit. The 40S subunit contains about 32 different proteins and 1 molecule of RNA (18S). The 60S subunit contains about 42 different proteins and 3 molecules of RNA (28S, 5.8S and 5S).

It localises to the cytoplasm. Component of the ribosome, a large ribonucleoprotein complex responsible for the synthesis of proteins in the cell. The small ribosomal subunit (SSU) binds messenger RNAs (mRNAs) and translates the encoded message by selecting cognate aminoacyl-transfer RNA (tRNA) molecules. The large subunit (LSU) contains the ribosomal catalytic site termed the peptidyl transferase center (PTC), which catalyzes the formation of peptide bonds, thereby polymerizing the amino acids delivered by tRNAs into a polypeptide chain. The nascent polypeptides leave the ribosome through a tunnel in the LSU and interact with protein factors that function in enzymatic processing, targeting, and the membrane insertion of nascent chains at the exit of the ribosomal tunnel. This is Small ribosomal subunit protein eS1 from Plasmodium falciparum (isolate 3D7).